The chain runs to 707 residues: Ribosomal RNA large subunit methyltransferase K/L (707 aa).

Positions 43-154 constitute a THUMP domain; it reads QIYRCCLWSR…KDKAILGVDM (112 aa).

The protein belongs to the methyltransferase superfamily. RlmKL family.

Its subcellular location is the cytoplasm. It carries out the reaction guanosine(2445) in 23S rRNA + S-adenosyl-L-methionine = N(2)-methylguanosine(2445) in 23S rRNA + S-adenosyl-L-homocysteine + H(+). The enzyme catalyses guanosine(2069) in 23S rRNA + S-adenosyl-L-methionine = N(2)-methylguanosine(2069) in 23S rRNA + S-adenosyl-L-homocysteine + H(+). In terms of biological role, specifically methylates the guanine in position 2445 (m2G2445) and the guanine in position 2069 (m7G2069) of 23S rRNA. The polypeptide is Ribosomal RNA large subunit methyltransferase K/L (Vibrio parahaemolyticus serotype O3:K6 (strain RIMD 2210633)).